A 242-amino-acid chain; its full sequence is tRNA (guanine-N(1)-)-methyltransferase (242 aa).

S-adenosyl-L-methionine is bound by residues Gly-114 and 134–139; that span reads IGDFVL. Over residues 223 to 233 the composition is skewed to basic and acidic residues; it reads RRDLLPEHSKN. The tract at residues 223-242 is disordered; that stretch reads RRDLLPEHSKNNPEQTNKLS.

This sequence belongs to the RNA methyltransferase TrmD family. As to quaternary structure, homodimer.

It localises to the cytoplasm. The catalysed reaction is guanosine(37) in tRNA + S-adenosyl-L-methionine = N(1)-methylguanosine(37) in tRNA + S-adenosyl-L-homocysteine + H(+). In terms of biological role, specifically methylates guanosine-37 in various tRNAs. The chain is tRNA (guanine-N(1)-)-methyltransferase from Rhodopirellula baltica (strain DSM 10527 / NCIMB 13988 / SH1).